The chain runs to 266 residues: uncharacterized protein (266 aa).

Phosphoserine is present on Ser176. Phosphothreonine is present on Thr178.

This is an uncharacterized protein from Schizosaccharomyces pombe (strain 972 / ATCC 24843) (Fission yeast).